The chain runs to 680 residues: Outer dense fiber protein 2 (680 aa).

The segment at 27-46 (LPKPSATSSQKSHKRGMKGD) is disordered. Phosphoserine is present on residues S68 and S69. At T87 the chain carries Phosphothreonine. S90 carries the post-translational modification Phosphoserine; by TSSK4. Phosphoserine occurs at positions 101 and 104. A Phosphothreonine modification is found at T105. Phosphoserine occurs at positions 110 and 124. K133 is covalently cross-linked (Glycyl lysine isopeptide (Lys-Gly) (interchain with G-Cter in SUMO2)). Residue S134 is modified to Phosphoserine. Residues 139–212 (QKGERQMAKR…MSKLVEAEMD (74 aa)) adopt a coiled-coil conformation. Phosphothreonine is present on T226. S256 carries the phosphoserine modification. Coiled-coil stretches lie at residues 275–418 (KEDS…AEQL) and 456–630 (EIIV…SDLR). The interval 387–410 (KQKGDRDKESLKKAIRAQKERAEK) is disordered. S627 bears the Phosphoserine mark. Residues 632–680 (RETGGDQCPEYRVPTGDCQEGGGNPPVPAAARGENTGMWDPGKAVGERH) form a disordered region.

The protein belongs to the ODF2 family. As to quaternary structure, self-associates. Associates with microtubules and forms a fibrillar structure partially linked to the microtubule network. Interacts via its C-terminus with PLK1. Interacts with ODF1. Interacts with MARK4; the interaction is required for localization of ODF2 to centrioles. Interacts with TSSK4. Interacts with AKNA. Interacts with QRICH2. Interacts with CFAP58. Interacts with BBOF1. Interacts with CCDC38. Interacts with CCDC42. Tyrosine phosphorylated. Phosphorylated on Ser-90 by TSSK4.

The protein localises to the cytoplasm. It localises to the cytoskeleton. Its subcellular location is the microtubule organizing center. The protein resides in the centrosome. It is found in the cell projection. The protein localises to the cilium. It localises to the centriole. Its subcellular location is the spindle pole. The protein resides in the flagellum. In terms of biological role, seems to be a major component of sperm tail outer dense fibers (ODF). ODFs are filamentous structures located on the outside of the axoneme in the midpiece and principal piece of the mammalian sperm tail and may help to maintain the passive elastic structures and elastic recoil of the sperm tail. May have a modulating influence on sperm motility. Functions as a general scaffold protein that is specifically localized at the distal/subdistal appendages of mother centrioles. Component of the centrosome matrix required for the localization of PLK1 and NIN to the centrosomes. Required for the formation and/or maintenance of normal CETN1 assembly. The sequence is that of Outer dense fiber protein 2 (ODF2) from Pongo abelii (Sumatran orangutan).